Reading from the N-terminus, the 134-residue chain is uncharacterized protein (134 aa).

The tract at residues 59 to 92 (VSKPKRRSPHPHGNKAADKRKTTEKEPERKKRVG) is disordered. The span at 61 to 71 (KPKRRSPHPHG) shows a compositional bias: basic residues. The segment covering 73 to 87 (KAADKRKTTEKEPER) has biased composition (basic and acidic residues).

This is an uncharacterized protein from Saccharomyces cerevisiae (strain ATCC 204508 / S288c) (Baker's yeast).